Consider the following 828-residue polypeptide: Fibroblast growth factor receptor 4 (828 aa).

The N-terminal stretch at 1–31 is a signal peptide; it reads MSGSIRRSYTAMQNFPRFLLGVLFVATLSSC. At 32 to 392 the chain is on the extracellular side; it reads RPRLSEDEAN…AEPAESRYMD (361 aa). The 95-residue stretch at 33 to 127 folds into the Ig-like C2-type 1 domain; sequence PRLSEDEANW…GKILRRFSIS (95 aa). A disulfide bridge connects residues cysteine 67 and cysteine 112. Asparagine 70 carries an N-linked (GlcNAc...) asparagine glycan. Residues 132–156 are disordered; that stretch reads LASGDEEEEEEDDDDEDGRREDTTA. Residues 135–147 show a composition bias toward acidic residues; the sequence is GDEEEEEEDDDDE. Ig-like C2-type domains follow at residues 169 to 259 and 272 to 372; these read PYWT…LTYT and PILQ…AWLT. The cysteines at positions 194 and 247 are disulfide-linked. N-linked (GlcNAc...) asparagine glycosylation is found at asparagine 244, asparagine 281, asparagine 313, and asparagine 345. A disulfide bridge connects residues cysteine 294 and cysteine 356. The chain crosses the membrane as a helical span at residues 393 to 413; sequence IIIYTSGFLAVAMAIMIVILC. The Cytoplasmic segment spans residues 414 to 828; it reads RMQTPHSKQT…YHNIHSQLGT (415 aa). The Protein kinase domain maps to 490-777; the sequence is LVLGKPLGEG…ILTAVSEEYL (288 aa). Residues 496 to 504 and lysine 526 contribute to the ATP site; that span reads LGEGCFGQV. The active-site Proton acceptor is aspartate 635. Phosphotyrosine; by autocatalysis is present on residues tyrosine 665, tyrosine 666, and tyrosine 776.

The protein belongs to the protein kinase superfamily. Tyr protein kinase family. Fibroblast growth factor receptor subfamily. Post-translationally, ubiquitinated. Subject to proteasomal degradation when not fully glycosylated. In terms of processing, autophosphorylated. Binding of FGF family members together with heparan sulfate proteoglycan or heparin promotes receptor dimerization and autophosphorylation on tyrosine residues. Autophosphorylation occurs in trans between the two FGFR molecules present in the dimer.

It localises to the cell membrane. The protein resides in the endosome. It is found in the endoplasmic reticulum. It carries out the reaction L-tyrosyl-[protein] + ATP = O-phospho-L-tyrosyl-[protein] + ADP + H(+). Its activity is regulated as follows. Present in an inactive conformation in the absence of bound ligand. Ligand binding leads to dimerization and activation by autophosphorylation on tyrosine residues. Tyrosine-protein kinase that acts as a cell-surface receptor for fibroblast growth factors and plays a role in the regulation of cell proliferation, differentiation and migration, and in regulation of lipid metabolism, bile acid biosynthesis, glucose uptake, vitamin D metabolism and phosphate homeostasis. Required for normal down-regulation of the expression of CYP7A1, the rate-limiting enzyme in bile acid synthesis, in response to FGF19. Phosphorylates PLCG1 and FRS2. Ligand binding leads to the activation of several signaling cascades. Activation of PLCG1 leads to the production of the cellular signaling molecules diacylglycerol and inositol 1,4,5-trisphosphate. Phosphorylation of FRS2 triggers recruitment of GRB2, GAB1, PIK3R1 and SOS1, and mediates activation of RAS, MAPK1/ERK2, MAPK3/ERK1 and the MAP kinase signaling pathway, as well as of the AKT1 signaling pathway. The polypeptide is Fibroblast growth factor receptor 4 (fgfr4) (Xenopus laevis (African clawed frog)).